The sequence spans 134 residues: ATP synthase epsilon chain, chloroplastic (134 aa).

It belongs to the ATPase epsilon chain family. In terms of assembly, F-type ATPases have 2 components, CF(1) - the catalytic core - and CF(0) - the membrane proton channel. CF(1) has five subunits: alpha(3), beta(3), gamma(1), delta(1), epsilon(1). CF(0) has three main subunits: a, b and c.

The protein localises to the plastid. The protein resides in the chloroplast thylakoid membrane. Its function is as follows. Produces ATP from ADP in the presence of a proton gradient across the membrane. The polypeptide is ATP synthase epsilon chain, chloroplastic (Amborella trichopoda).